The sequence spans 158 residues: Small ribosomal subunit protein uS9 (158 aa).

It belongs to the universal ribosomal protein uS9 family.

The polypeptide is Small ribosomal subunit protein uS9 (Brucella anthropi (strain ATCC 49188 / DSM 6882 / CCUG 24695 / JCM 21032 / LMG 3331 / NBRC 15819 / NCTC 12168 / Alc 37) (Ochrobactrum anthropi)).